The sequence spans 425 residues: MSPAFRAMDVEPRTKGILLEPFVHQVGGHSCVLRFNETTLCKPLIPREHQFYETLPAEMRKFTPQYKGVVSVCFEEDEDRNLCLIAYPLKGDHGTVDLVDNSDCEPKSKVLRWTTKKHHVLESEKTPKEWVRQHRKEEKMKSHKLEEEFEWLKKSEVLYYSVEKKGNVSSQLKHYNPWSMKCHQQQLQRMKENAKHRNQYKFILLENLTSRYEVPCVLDLKMGTRQHGDDASEEKAANQIRKCQQSTSAVIGVRVCGMQVYQAGSGQLMFMNKYHGRKLSVQGFKEALFQFFHNGRYLRRELLGPVLKKLAELKAVLERQESYRFYSSSLLVIYDGKEWPEVALDSDAEDLEDLSEESADESAGAYAYKPIGASSVDVRMIDFAHTTCRLYGEDSVVHEGQDAGYIFGLQSLIDIVTEISEDSGE.

ATP contacts are provided by residues glutamate 206 to leucine 208 and aspartate 219. Substrate contacts are provided by residues proline 215–glycine 223, lysine 221, and lysine 235–lysine 242. Aspartate 382 lines the ATP pocket. Histidine 385 is a binding site for substrate.

The protein belongs to the inositol phosphokinase (IPK) family. As to expression, detected in kidney, intestine, liver and heart.

It is found in the nucleus. It carries out the reaction 1D-myo-inositol hexakisphosphate + ATP = 5-diphospho-1D-myo-inositol 1,2,3,4,6-pentakisphosphate + ADP. The protein operates within phospholipid metabolism; phosphatidylinositol metabolism. Functionally, converts inositol hexakisphosphate (InsP6) to diphosphoinositol pentakisphosphate (InsP7/PP-InsP5). This Oryctolagus cuniculus (Rabbit) protein is Inositol hexakisphosphate kinase 2 (IP6K2).